The primary structure comprises 375 residues: Fluoride export protein 1 (375 aa).

Topologically, residues 1–11 (MIFNPVISNHK) are cytoplasmic. The chain crosses the membrane as a helical span at residues 12–32 (LSHYIHVFCTFTTFCILGTET). The Extracellular portion of the chain corresponds to 33–34 (RQ). The chain crosses the membrane as a helical span at residues 35 to 55 (AITALSTYTPAFVTAPTVLWS). Residues 56–79 (NCSSCMLMGIMQSLNAYTWMKDHQ) are Cytoplasmic-facing. A helical transmembrane segment spans residues 80–100 (VLFLGVTTGYCGALSSFSSML). Over 101-127 (LEMFEHSTNLTNGNIANHTKLPNRAYG) the chain is Extracellular. Asn109 and Asn117 each carry an N-linked (GlcNAc...) asparagine glycan. The chain crosses the membrane as a helical span at residues 128–148 (IMEFLSVLLVHLMVSMGSLIF). Over 149–213 (GRQLGKEVIV…FKKFFDIVDK (65 aa)) the chain is Cytoplasmic. Residues 214–234 (LAYALAFPLIILFVVLCAYYE) traverse the membrane as a helical segment. Asn235 carries an N-linked (GlcNAc...) asparagine glycan. Topologically, residues 235 to 241 (NYSRGKW) are extracellular. Residues 242-262 (TLPCLFGIFAGFLRYWLAEMF) traverse the membrane as a helical segment. The Cytoplasmic segment spans residues 263 to 268 (NKTNKK). The helical transmembrane segment at 269–289 (FPLGTFLANVFATLLIGIFTM) threads the bilayer. Residues 290-310 (VQRGKKHFSTDVPIVNSLNSC) lie on the Extracellular side of the membrane. A helical transmembrane segment spans residues 311-331 (HIVSALISGFCGTLSTISTFI). The Cytoplasmic segment spans residues 332 to 338 (NEGYKLS). The helical transmembrane segment at 339–359 (FINMLIYYTVSIAISYCLLVI) threads the bilayer. Over 360-375 (TLGSYAWTRGLTNPIC) the chain is Extracellular.

The protein belongs to the fluoride channel Fluc/FEX (TC 1.A.43) family.

It localises to the cell membrane. The enzyme catalyses fluoride(in) = fluoride(out). In terms of biological role, fluoride channel required for the rapid expulsion of cytoplasmic fluoride. The sequence is that of Fluoride export protein 1 from Saccharomyces cerevisiae (strain ATCC 204508 / S288c) (Baker's yeast).